The following is a 512-amino-acid chain: Maturase K (512 aa).

Belongs to the intron maturase 2 family. MatK subfamily.

It is found in the plastid. The protein localises to the chloroplast. In terms of biological role, usually encoded in the trnK tRNA gene intron. Probably assists in splicing its own and other chloroplast group II introns. The protein is Maturase K of Oenothera glazioviana (Large-flowered evening primrose).